A 331-amino-acid polypeptide reads, in one-letter code: Nucleoporin Nup35 (331 aa).

Disordered stretches follow at residues 1-63 (MEPM…HELN) and 79-110 (AHTA…GLFD). 3 stretches are compositionally biased toward polar residues: residues 8–20 (SPVN…QTQY), 35–56 (HKNT…SPGG), and 84–104 (GANS…TGPP). The RRM Nup35-type domain occupies 187 to 268 (RLSDFWVTIF…SRCTDRSVID (82 aa)).

It belongs to the Nup35 family. As to quaternary structure, interacts with Nup154.

It localises to the nucleus. The protein resides in the nuclear pore complex. Functions as a component of the nuclear pore complex (NPC). May have a role in the organization of the inner nuclear membrane proteins at the nuclear envelope together with Nup154. In Drosophila melanogaster (Fruit fly), this protein is Nucleoporin Nup35.